Reading from the N-terminus, the 404-residue chain is MVGFKTLALHLAAVLPALAAPVDKQATQVVPNSYIITLKQGASAASFHNHLSWVGDVHRRSVSKRDTTGVDKVFDLDGFTAYSGSFDAATLQEIKKSDEVAFVEPDQVWDLYTLSTQSGAPWGLGSISHRKPNSTDYVYDPAGLGADHYAYIIDTGLDTEHVEFEGRGTLGYNAYPNSQFIDKIGHGTHVAGTIAGKTYGVAKKASIVSVRVFDTGSVTRQSTTAIVLDGFSWAVKDITAKGRQAKSVISMSLGGGRSEAFNAAVEAAYQANILTVAAAGNSAWDASQYSPASAPNAITVGAIDVDNVMAWFSNYGPVVDVFAPGVAVESAWIGSSHAEHDVLDGTSMATPHVSGLVLYLKSLEGFASAAAVTDRIKALGTNDVVTGLEGTDSPNLIAFNGVTA.

An N-terminal signal peptide occupies residues 1–19 (MVGFKTLALHLAAVLPALA). The propeptide occupies 20 to 112 (APVDKQATQV…VEPDQVWDLY (93 aa)). The Inhibitor I9 domain maps to 33-111 (SYIITLKQGA…FVEPDQVWDL (79 aa)). In terms of domain architecture, Peptidase S8 spans 121 to 404 (PWGLGSISHR…NLIAFNGVTA (284 aa)). An N-linked (GlcNAc...) asparagine glycan is attached at Asn-133. Residues Asp-154, His-186, and Ser-347 each act as charge relay system in the active site.

This sequence belongs to the peptidase S8 family.

It is found in the secreted. This chain is Subtilisin-like proteinase Mp1, found in Magnaporthiopsis poae (Kentucky bluegrass fungus).